A 364-amino-acid chain; its full sequence is Dual-specificity RNA methyltransferase RlmN (364 aa).

Glutamate 91 serves as the catalytic Proton acceptor. The Radical SAM core domain occupies 97 to 333 (ESDRGTLCIS…VTVRKTRGDD (237 aa)). Residues cysteine 104 and cysteine 338 are joined by a disulfide bond. Positions 111, 115, and 118 each coordinate [4Fe-4S] cluster. Residues 164–165 (GE), serine 196, 218–220 (SLH), and asparagine 295 contribute to the S-adenosyl-L-methionine site. Residue cysteine 338 is the S-methylcysteine intermediate of the active site.

This sequence belongs to the radical SAM superfamily. RlmN family. [4Fe-4S] cluster is required as a cofactor.

Its subcellular location is the cytoplasm. The catalysed reaction is adenosine(2503) in 23S rRNA + 2 reduced [2Fe-2S]-[ferredoxin] + 2 S-adenosyl-L-methionine = 2-methyladenosine(2503) in 23S rRNA + 5'-deoxyadenosine + L-methionine + 2 oxidized [2Fe-2S]-[ferredoxin] + S-adenosyl-L-homocysteine. It carries out the reaction adenosine(37) in tRNA + 2 reduced [2Fe-2S]-[ferredoxin] + 2 S-adenosyl-L-methionine = 2-methyladenosine(37) in tRNA + 5'-deoxyadenosine + L-methionine + 2 oxidized [2Fe-2S]-[ferredoxin] + S-adenosyl-L-homocysteine. In terms of biological role, specifically methylates position 2 of adenine 2503 in 23S rRNA and position 2 of adenine 37 in tRNAs. m2A2503 modification seems to play a crucial role in the proofreading step occurring at the peptidyl transferase center and thus would serve to optimize ribosomal fidelity. The chain is Dual-specificity RNA methyltransferase RlmN from Neisseria meningitidis serogroup C (strain 053442).